We begin with the raw amino-acid sequence, 48 residues long: Cytochrome b559 subunit beta (48 aa).

The chain crosses the membrane as a helical span at residues 23-39; that stretch reads WLAVHALAIPSVFFLGS. His27 serves as a coordination point for heme.

The protein belongs to the PsbE/PsbF family. Heterodimer of an alpha subunit and a beta subunit. PSII is composed of 1 copy each of membrane proteins PsbA, PsbB, PsbC, PsbD, PsbE, PsbF, PsbH, PsbI, PsbJ, PsbK, PsbL, PsbM, PsbT, PsbX, PsbY, Psb30/Ycf12, peripheral proteins PsbO, CyanoQ (PsbQ), PsbU, PsbV and a large number of cofactors. It forms dimeric complexes. Heme b serves as cofactor.

It is found in the cellular thylakoid membrane. This b-type cytochrome is tightly associated with the reaction center of photosystem II (PSII). PSII is a light-driven water:plastoquinone oxidoreductase that uses light energy to abstract electrons from H(2)O, generating O(2) and a proton gradient subsequently used for ATP formation. It consists of a core antenna complex that captures photons, and an electron transfer chain that converts photonic excitation into a charge separation. This Prochlorococcus marinus (strain MIT 9301) protein is Cytochrome b559 subunit beta.